The primary structure comprises 248 residues: Proteasome subunit alpha type-7 (248 aa).

A glycan (O-linked (GlcNAc) serine) is linked at serine 130. Tyrosine 153 is modified (phosphotyrosine; by ABL1 and ABL2). Lysine 227 carries the post-translational modification N6-acetyllysine.

The protein belongs to the peptidase T1A family. The 26S proteasome consists of a 20S proteasome core and two 19S regulatory subunits. The 20S proteasome core is a barrel-shaped complex made of 28 subunits that are arranged in four stacked rings. The two outer rings are each formed by seven alpha subunits, and the two inner rings are formed by seven beta subunits. The proteolytic activity is exerted by three beta-subunits PSMB5, PSMB6 and PSMB7. PSMA7 interacts directly with the PSMG1-PSMG2 heterodimer which promotes 20S proteasome assembly. Interacts with HIF1A. Interacts with RAB7A. Interacts with PRKN. Interacts with ABL1 and ABL2. Interacts with EMAP2. Interacts with MAVS. In terms of processing, phosphorylation by ABL1 or ABL2 leads to an inhibition of proteasomal activity and cell cycle transition blocks. As to expression, detected in liver (at protein level).

It is found in the cytoplasm. It localises to the nucleus. Its function is as follows. Component of the 20S core proteasome complex involved in the proteolytic degradation of most intracellular proteins. This complex plays numerous essential roles within the cell by associating with different regulatory particles. Associated with two 19S regulatory particles, forms the 26S proteasome and thus participates in the ATP-dependent degradation of ubiquitinated proteins. The 26S proteasome plays a key role in the maintenance of protein homeostasis by removing misfolded or damaged proteins that could impair cellular functions, and by removing proteins whose functions are no longer required. Associated with the PA200 or PA28, the 20S proteasome mediates ubiquitin-independent protein degradation. This type of proteolysis is required in several pathways including spermatogenesis (20S-PA200 complex) or generation of a subset of MHC class I-presented antigenic peptides (20S-PA28 complex). This chain is Proteasome subunit alpha type-7 (Psma7), found in Mus musculus (Mouse).